The primary structure comprises 271 residues: NAD kinase (271 aa).

D52 serves as the catalytic Proton acceptor. NAD(+) contacts are provided by residues D52–G53, N129–E130, R155, D157, and A192.

It belongs to the NAD kinase family. It depends on a divalent metal cation as a cofactor.

The protein resides in the cytoplasm. It carries out the reaction NAD(+) + ATP = ADP + NADP(+) + H(+). Functionally, involved in the regulation of the intracellular balance of NAD and NADP, and is a key enzyme in the biosynthesis of NADP. Catalyzes specifically the phosphorylation on 2'-hydroxyl of the adenosine moiety of NAD to yield NADP. The chain is NAD kinase from Geobacillus stearothermophilus (Bacillus stearothermophilus).